A 207-amino-acid polypeptide reads, in one-letter code: 3-isopropylmalate dehydratase small subunit (207 aa).

This sequence belongs to the LeuD family. LeuD type 1 subfamily. Heterodimer of LeuC and LeuD.

The enzyme catalyses (2R,3S)-3-isopropylmalate = (2S)-2-isopropylmalate. It participates in amino-acid biosynthesis; L-leucine biosynthesis; L-leucine from 3-methyl-2-oxobutanoate: step 2/4. Functionally, catalyzes the isomerization between 2-isopropylmalate and 3-isopropylmalate, via the formation of 2-isopropylmaleate. The polypeptide is 3-isopropylmalate dehydratase small subunit (Rhodospirillum rubrum (strain ATCC 11170 / ATH 1.1.1 / DSM 467 / LMG 4362 / NCIMB 8255 / S1)).